The sequence spans 902 residues: Protein translocase subunit SecA (902 aa).

Residues glutamine 87, 105–109 (GEGKT), and aspartate 512 contribute to the ATP site. Positions 847 to 902 (DAERLARQQQLSHLDDQSAAAQEMASQTGDRKIGRNDPCPCGSGKKYKQCHGRLNA) are disordered. Residues cysteine 885, cysteine 887, cysteine 896, and histidine 897 each contribute to the Zn(2+) site. Basic residues predominate over residues 891 to 902 (KKYKQCHGRLNA).

This sequence belongs to the SecA family. As to quaternary structure, monomer and homodimer. Part of the essential Sec protein translocation apparatus which comprises SecA, SecYEG and auxiliary proteins SecDF-YajC and YidC. Requires Zn(2+) as cofactor.

It is found in the cell inner membrane. The protein resides in the cytoplasm. It carries out the reaction ATP + H2O + cellular proteinSide 1 = ADP + phosphate + cellular proteinSide 2.. In terms of biological role, part of the Sec protein translocase complex. Interacts with the SecYEG preprotein conducting channel. Has a central role in coupling the hydrolysis of ATP to the transfer of proteins into and across the cell membrane, serving both as a receptor for the preprotein-SecB complex and as an ATP-driven molecular motor driving the stepwise translocation of polypeptide chains across the membrane. This chain is Protein translocase subunit SecA, found in Edwardsiella ictaluri (strain 93-146).